A 1159-amino-acid chain; its full sequence is ATP-dependent helicase/deoxyribonuclease subunit B (1159 aa).

A UvrD-like helicase ATP-binding domain is found at 1–401 (MSIRFVYGRS…LLKNWSYESV (401 aa)). Residue 8 to 15 (GRSGTGKS) coordinates ATP. Residues 279 to 582 (PYRFKGNLEL…NIGDIARIKG (304 aa)) form the UvrD-like helicase C-terminal domain. Residues Cys787, Cys1106, Cys1109, and Cys1115 each coordinate [4Fe-4S] cluster.

Belongs to the helicase family. AddB/RexB type 1 subfamily. In terms of assembly, heterodimer of AddA and AddB. Mg(2+) serves as cofactor. It depends on [4Fe-4S] cluster as a cofactor.

The heterodimer acts as both an ATP-dependent DNA helicase and an ATP-dependent, dual-direction single-stranded exonuclease. Recognizes the chi site generating a DNA molecule suitable for the initiation of homologous recombination. The AddB subunit has 5' -&gt; 3' nuclease activity but not helicase activity. The protein is ATP-dependent helicase/deoxyribonuclease subunit B of Clostridium beijerinckii (strain ATCC 51743 / NCIMB 8052) (Clostridium acetobutylicum).